We begin with the raw amino-acid sequence, 120 residues long: Ribonuclease P protein component (120 aa).

Belongs to the RnpA family. In terms of assembly, consists of a catalytic RNA component (M1 or rnpB) and a protein subunit.

The catalysed reaction is Endonucleolytic cleavage of RNA, removing 5'-extranucleotides from tRNA precursor.. RNaseP catalyzes the removal of the 5'-leader sequence from pre-tRNA to produce the mature 5'-terminus. It can also cleave other RNA substrates such as 4.5S RNA. The protein component plays an auxiliary but essential role in vivo by binding to the 5'-leader sequence and broadening the substrate specificity of the ribozyme. The sequence is that of Ribonuclease P protein component from Mycobacterium leprae (strain Br4923).